The primary structure comprises 142 residues: Hemoglobin subunit alpha-A (142 aa).

The Globin domain occupies 2 to 142 (VLSANDKSNV…VGTVLTAKYR (141 aa)). His59 lines the O2 pocket. His88 is a binding site for heme b.

It belongs to the globin family. Heterotetramer of two alpha chains and two beta chains. In terms of tissue distribution, red blood cells.

Its function is as follows. Involved in oxygen transport from the lung to the various peripheral tissues. This Columba livia (Rock dove) protein is Hemoglobin subunit alpha-A (HBAA).